The following is a 660-amino-acid chain: Arginine--tRNA ligase, cytoplasmic (660 aa).

Met-1 is modified (N-acetylmethionine). The segment at 1–72 (MDVLVSECSA…QAERNKPTKN (72 aa)) is could be involved in the assembly of the multisynthetase complex. L-arginine-binding positions include 200–202 (SPN), His-211, Tyr-384, Asp-388, and Gln-412. Residues 201 to 212 (PNIAKEMHVGHL) carry the 'HIGH' region motif. Positions 529–543 (NTAAYLLYAFTRIRS) are interaction with tRNA.

It belongs to the class-I aminoacyl-tRNA synthetase family. Interacts (via N-terminus) with AIMP1 (via N-terminus); this stimulates its catalytic activity. Interacts (via N-terminus) with LARS2 (via C-terminus). Monomer. Part of a multisubunit complex that groups tRNA ligases for Arg (RARS1), Asp (DARS1), Gln (QARS1), Ile (IARS1), Leu (LARS1), Lys (KARS1), Met (MARS1) the bifunctional ligase for Glu and Pro (EPRS1) and the auxiliary subunits AIMP1/p43, AIMP2/p38 and EEF1E1/p18. Interacts with QARS1. Part of a complex composed of RARS1, QARS1 and AIMP1.

The protein localises to the cytoplasm. Its subcellular location is the cytosol. The enzyme catalyses tRNA(Arg) + L-arginine + ATP = L-arginyl-tRNA(Arg) + AMP + diphosphate. Forms part of a macromolecular complex that catalyzes the attachment of specific amino acids to cognate tRNAs during protein synthesis. Modulates the secretion of AIMP1 and may be involved in generation of the inflammatory cytokine EMAP2 from AIMP1. This chain is Arginine--tRNA ligase, cytoplasmic, found in Homo sapiens (Human).